The chain runs to 146 residues: Large ribosomal subunit protein uL16 (146 aa).

This sequence belongs to the universal ribosomal protein uL16 family. As to quaternary structure, part of the 50S ribosomal subunit.

Its function is as follows. Binds 23S rRNA and is also seen to make contacts with the A and possibly P site tRNAs. In Lactobacillus acidophilus (strain ATCC 700396 / NCK56 / N2 / NCFM), this protein is Large ribosomal subunit protein uL16.